We begin with the raw amino-acid sequence, 115 residues long: Cobalt-zinc-cadmium resistance protein CzcI (115 aa).

A signal peptide spans 1 to 20; sequence MRRFVLIFVLLILPFQFSWA. Positions 93 to 102 are enriched in polar residues; the sequence is QHSSEFSSLN. The disordered stretch occupies residues 93–115; it reads QHSSEFSSLNARAPDRPQWQRLA.

Its subcellular location is the periplasm. Its function is as follows. Component of the czc cation-efflux system that confers resistance to cobalt, zinc and cadmium. May have a regulatory function. In Cupriavidus metallidurans (strain ATCC 43123 / DSM 2839 / NBRC 102507 / CH34) (Ralstonia metallidurans), this protein is Cobalt-zinc-cadmium resistance protein CzcI (czcI).